Here is a 2912-residue protein sequence, read N- to C-terminus: Fibrillin-2 (2912 aa).

An N-terminal signal peptide occupies residues 1–28; that stretch reads MGRRRRLCLQLYFLWLGCVVLWAQGTAG. Residues 27 to 52 are disordered; the sequence is AGQPQPPPPKPPRPQPPPQQVRSATA. Residues 29–77 constitute a propeptide that is removed on maturation; the sequence is QPQPPPPKPPRPQPPPQQVRSATAGSEGGFLAPEYREEGAAVASRVRRR. The span at 30-45 shows a compositional bias: pro residues; the sequence is PQPPPPKPPRPQPPPQ. 3 consecutive EGF-like domains span residues 111–142, 145–176, and 176–208; these read IVPICRNSCGDGFCSRPNMCTCSSGQISSTCG, SIQQCSVRCMNGGTCADDHCQCQKGYIGTYCG, and GQPVCENGCQNGGRCIGPNRCACVYGFTGPQCE. 9 disulfides stabilise this stretch: cysteine 115–cysteine 124, cysteine 119–cysteine 130, cysteine 132–cysteine 141, cysteine 149–cysteine 159, cysteine 153–cysteine 164, cysteine 166–cysteine 175, cysteine 180–cysteine 190, cysteine 184–cysteine 196, and cysteine 198–cysteine 207. An interaction with MFAP4 region spans residues 149–359; it reads CSVRCMNGGT…VTSTDGSRCI (211 aa). One can recognise a TB 1 domain in the interval 214–266; that stretch reads GPCFTQVNNQMCQGQLTGIVCTKTLCCATIGRAWGHPCEMCPAQPQPCRRGFI. One can recognise an EGF-like 4; calcium-binding domain in the interval 276–317; the sequence is DVDECQAIPGICQGGNCINTVGSFECRCPAGHKQSETTQKCE. Cystine bridges form between cysteine 280–cysteine 292, cysteine 287–cysteine 301, cysteine 303–cysteine 316, cysteine 322–cysteine 334, cysteine 329–cysteine 343, and cysteine 345–cysteine 358. A glycan (O-linked (Glc) serine) is linked at serine 298. The EGF-like 5; calcium-binding domain maps to 318–359; sequence DIDECSIIPGICETGECSNTVGSYFCVCPRGYVTSTDGSRCI. A glycan (O-linked (Glc) serine) is linked at serine 340. Residues 364–417 enclose the TB 2 domain; it reads GMCFSGLVNGRCAQELPGRMTKMQCCCEPGRCWGIGTIPEACPVRGSEEYRRLC. N-linked (GlcNAc...) asparagine glycosylation occurs at asparagine 492. One can recognise an EGF-like 6 domain in the interval 494–534; that stretch reads TIDICKHHANLCLNGRCIPTVSSYRCECNMGYKQDANGDCI. Intrachain disulfides connect cysteine 498–cysteine 510, cysteine 505–cysteine 519, cysteine 521–cysteine 533, cysteine 539–cysteine 549, cysteine 544–cysteine 558, cysteine 560–cysteine 573, cysteine 579–cysteine 591, cysteine 586–cysteine 600, cysteine 602–cysteine 615, cysteine 621–cysteine 632, cysteine 627–cysteine 641, cysteine 643–cysteine 656, cysteine 662–cysteine 673, cysteine 668–cysteine 682, and cysteine 684–cysteine 697. A glycan (O-linked (Glc) serine) is linked at serine 516. The EGF-like 7; calcium-binding domain maps to 535–574; the sequence is DVDECTSNPCTNGDCVNTPGSYYCKCHAGFQRTPTKQACI. Serine 555 carries O-linked (Glc) serine glycosylation. The EGF-like 8; calcium-binding domain maps to 575–616; the sequence is DIDECIQNGVLCKNGRCVNTDGSFQCICNAGFELTTDGKNCV. A glycan (O-linked (Glc) serine) is linked at serine 597. In terms of domain architecture, EGF-like 9; calcium-binding spans 617-657; it reads DHDECTTTNMCLNGMCINEDGSFKCICKPGFVLAPNGRYCT. Residue serine 638 is glycosylated (O-linked (Glc) serine). In terms of domain architecture, EGF-like 10; calcium-binding spans 658–698; it reads DVDECQTPGICMNGHCINSEGSFRCDCPPGLAVGMDGRVCV. Serine 679 is a glycosylation site (O-linked (Glc) serine). Residues 704–756 enclose the TB 3 domain; that stretch reads STCYGGIKKGVCVRPFPGAVTKSECCCANPDYGFGEPCQPCPAKNSAEFHGLC. In terms of domain architecture, EGF-like 11; calcium-binding spans 768-809; the sequence is DINECALDPDICANGICENLRGSYRCNCNSGYEPDASGRNCI. Cystine bridges form between cysteine 772–cysteine 784, cysteine 779–cysteine 793, cysteine 795–cysteine 808, cysteine 814–cysteine 826, cysteine 821–cysteine 835, cysteine 837–cysteine 850, cysteine 856–cysteine 866, cysteine 861–cysteine 875, and cysteine 877–cysteine 890. The EGF-like 12; calcium-binding domain maps to 810–851; the sequence is DIDECLVNRLLCDNGLCRNTPGSYSCTCPPGYVFRTETETCE. O-linked (Glc) serine glycosylation is present at serine 832. The EGF-like 13; calcium-binding domain maps to 852 to 891; the sequence is DINECESNPCVNGACRNNLGSFNCECSPGSKLSSTGLICI. The O-linked (Glc) serine glycan is linked to serine 872. Positions 896-947 constitute a TB 4 domain; that stretch reads GTCWLNIQDSRCEVNINGATLKSECCATLGAAWGSPCERCELDTACPRGLAR. One can recognise an EGF-like 14; calcium-binding domain in the interval 955–996; that stretch reads DVNECEVFPGVCPNGRCVNSKGSFHCECPEGLTLDGTGRVCL. 3 disulfides stabilise this stretch: cysteine 959–cysteine 971, cysteine 966–cysteine 980, and cysteine 982–cysteine 995. O-linked (Glc) serine glycosylation is present at serine 977. One can recognise a TB 5 domain in the interval 1001 to 1052; the sequence is EQCYLKWDEDECIHPVPGKFRMDACCCAVGAAWGTECEECPKPGTKEYETLC. The EGF-like 15; calcium-binding domain maps to 1073-1114; that stretch reads DINECKAFPGMCTYGKCRNTIGSFKCRCNSGFALDMEERNCT. 36 cysteine pairs are disulfide-bonded: cysteine 1077-cysteine 1089, cysteine 1084-cysteine 1098, cysteine 1100-cysteine 1113, cysteine 1119-cysteine 1131, cysteine 1126-cysteine 1140, cysteine 1142-cysteine 1156, cysteine 1162-cysteine 1174, cysteine 1169-cysteine 1183, cysteine 1185-cysteine 1198, cysteine 1204-cysteine 1216, cysteine 1211-cysteine 1225, cysteine 1227-cysteine 1240, cysteine 1246-cysteine 1257, cysteine 1253-cysteine 1266, cysteine 1268-cysteine 1281, cysteine 1287-cysteine 1299, cysteine 1294-cysteine 1308, cysteine 1310-cysteine 1323, cysteine 1329-cysteine 1341, cysteine 1336-cysteine 1350, cysteine 1352-cysteine 1365, cysteine 1371-cysteine 1384, cysteine 1378-cysteine 1393, cysteine 1395-cysteine 1406, cysteine 1412-cysteine 1425, cysteine 1419-cysteine 1434, cysteine 1436-cysteine 1447, cysteine 1453-cysteine 1465, cysteine 1460-cysteine 1474, cysteine 1476-cysteine 1489, cysteine 1495-cysteine 1506, cysteine 1501-cysteine 1515, cysteine 1517-cysteine 1530, cysteine 1536-cysteine 1547, cysteine 1542-cysteine 1556, and cysteine 1558-cysteine 1571. Residue serine 1095 is glycosylated (O-linked (Glc) serine). Asparagine 1112 carries an N-linked (GlcNAc...) asparagine glycan. In terms of domain architecture, EGF-like 16; calcium-binding spans 1115 to 1157; that stretch reads DIDECRISPDLCGSGICVNTPGSFECECFEGYESGFMMMKNCM. Positions 1158–1199 constitute an EGF-like 17; calcium-binding domain; the sequence is DIDECERNPLLCRGGTCVNTEGSFQCDCPLGHELSPSREDCV. An O-linked (Glc) serine glycan is attached at serine 1180. In terms of domain architecture, EGF-like 18; calcium-binding spans 1200–1241; the sequence is DINECSLSDNLCRNGKCVNMIGTYQCSCNPGYQATPDRQGCT. An O-linked (Glc) threonine glycan is attached at threonine 1222. The EGF-like 19; calcium-binding domain occupies 1242–1282; the sequence is DIDECMIMNGGCDTQCTNSEGSYECSCSEGYALMPDGRSCA. Serine 1263 carries an O-linked (Glc) serine glycan. An EGF-like 20; calcium-binding domain is found at 1283 to 1324; it reads DIDECENNPDICDGGQCTNIPGEYRCLCYDGFMASMDMKTCI. The 42-residue stretch at 1325–1366 folds into the EGF-like 21; calcium-binding domain; that stretch reads DVNECDLNSNICMFGECENTKGSFICHCQLGYSVKKGTTGCT. A glycan (O-linked (Glc) serine) is linked at serine 1347. In terms of domain architecture, EGF-like 22; calcium-binding spans 1367–1407; it reads DVDECEIGAHNCDMHASCLNIPGSFKCSCREGWIGNGIKCI. O-linked (Glc) serine glycosylation occurs at serine 1390. The region spanning 1408–1448 is the EGF-like 23; calcium-binding domain; that stretch reads DLDECSNGTHQCSINAQCVNTPGSYRCACSEGFTGDGFTCS. An N-linked (GlcNAc...) asparagine glycan is attached at asparagine 1414. Residues 1449 to 1490 enclose the EGF-like 24; calcium-binding domain; sequence DVDECAENINLCENGQCLNVPGAYRCECEMGFTPASDSRSCQ. In terms of domain architecture, EGF-like 25; calcium-binding spans 1491-1531; that stretch reads DIDECSFQNICVFGTCNNLPGMFHCICDDGYELDRTGGNCT. A glycan (N-linked (GlcNAc...) asparagine) is linked at asparagine 1529. The 41-residue stretch at 1532–1572 folds into the EGF-like 26; calcium-binding domain; the sequence is DIDECADPINCVNGLCVNTPGRYECNCPPDFQLNPTGVGCV. One can recognise a TB 6 domain in the interval 1577 to 1633; sequence GNCYLKFGPRGDGSLSCNTEIGVGVSRSSCCCSLGKAWGNPCETCPPVNSTEYYTLC. Asparagine 1625 carries N-linked (GlcNAc...) asparagine glycosylation. The region spanning 1650-1691 is the EGF-like 27; calcium-binding domain; the sequence is DIDECQELPGLCQGGNCINTFGSFQCECPQGYYLSEDTRICE. 6 cysteine pairs are disulfide-bonded: cysteine 1654–cysteine 1666, cysteine 1661–cysteine 1675, cysteine 1677–cysteine 1690, cysteine 1696–cysteine 1708, cysteine 1703–cysteine 1717, and cysteine 1719–cysteine 1732. A glycan (O-linked (Glc) serine) is linked at serine 1672. In terms of domain architecture, EGF-like 28; calcium-binding spans 1692 to 1733; sequence DIDECFAHPGVCGPGTCYNTLGNYTCICPPEYMQVNGGHNCM. N-linked (GlcNAc...) asparagine glycosylation is present at asparagine 1714. Residues 1735 to 2171 form an interaction with MFAP4 region; the sequence is MRKSFCYRSY…VPSLHDTRED (437 aa). In terms of domain architecture, TB 7 spans 1738 to 1791; that stretch reads SFCYRSYNGTTCENELPFNVTKRMCCCTYNVGKAWNKPCEPCPTPGTADFKTIC. N-linked (GlcNAc...) asparagine glycans are attached at residues asparagine 1745 and asparagine 1756. The EGF-like 29; calcium-binding domain occupies 1808 to 1849; it reads DIDECKEIPGICANGVCINQIGSFRCECPTGFSYNDLLLVCE. 21 cysteine pairs are disulfide-bonded: cysteine 1812–cysteine 1824, cysteine 1819–cysteine 1833, cysteine 1835–cysteine 1848, cysteine 1854–cysteine 1867, cysteine 1861–cysteine 1876, cysteine 1878–cysteine 1890, cysteine 1896–cysteine 1908, cysteine 1903–cysteine 1917, cysteine 1919–cysteine 1932, cysteine 1938–cysteine 1948, cysteine 1943–cysteine 1957, cysteine 1959–cysteine 1971, cysteine 1977–cysteine 1990, cysteine 1985–cysteine 1999, cysteine 2001–cysteine 2014, cysteine 2020–cysteine 2032, cysteine 2027–cysteine 2041, cysteine 2043–cysteine 2054, cysteine 2060–cysteine 2072, cysteine 2067–cysteine 2081, and cysteine 2083–cysteine 2096. The region spanning 1850–1891 is the EGF-like 30; calcium-binding domain; that stretch reads DIDECSNGDNLCQRNADCINSPGSYRCECAAGFKLSPNGACV. The O-linked (Glc) serine glycan is linked to serine 1873. One can recognise an EGF-like 31; calcium-binding domain in the interval 1892 to 1933; it reads DRNECLEIPNVCSHGLCVDLQGSYQCICHNGFKASQDQTMCM. Residues 1934–1972 form the EGF-like 32; calcium-binding domain; it reads DVDECERHPCGNGTCKNTVGSYNCLCYPGFELTHNNDCL. Residue asparagine 1945 is glycosylated (N-linked (GlcNAc...) asparagine). Residue serine 1954 is glycosylated (O-linked (Glc) serine). Residues 1973–2015 enclose the EGF-like 33; calcium-binding domain; it reads DIDECSSFFGQVCRNGRCFNEIGSFKCLCNEGYELTPDGKNCI. O-linked (Glc) serine glycosylation is present at serine 1996. Positions 2016–2055 constitute an EGF-like 34; calcium-binding domain; that stretch reads DTNECVALPGSCSPGTCQNLEGSFRCICPPGYEVKSENCI. The region spanning 2056–2097 is the EGF-like 35; calcium-binding domain; it reads DINECDEDPNICLFGSCTNTPGGFQCLCPPGFVLSDNGRRCF. The TB 8 domain occupies 2102–2155; that stretch reads SFCFTNFENGKCSVPKAFNTTKAKCCCSKMPGEGWGDPCELCPKDDEVAFQDLC. N-linked (GlcNAc...) asparagine glycosylation occurs at asparagine 2120. The region spanning 2171–2212 is the EGF-like 36; calcium-binding domain; it reads DVNECLESPGICSNGQCINTDGSFRCECPMGYNLDYTGVRCV. 15 cysteine pairs are disulfide-bonded: cysteine 2175–cysteine 2187, cysteine 2182–cysteine 2196, cysteine 2198–cysteine 2211, cysteine 2217–cysteine 2228, cysteine 2223–cysteine 2237, cysteine 2239–cysteine 2251, cysteine 2257–cysteine 2268, cysteine 2264–cysteine 2277, cysteine 2279–cysteine 2292, cysteine 2298–cysteine 2312, cysteine 2305–cysteine 2321, cysteine 2323–cysteine 2336, cysteine 2342–cysteine 2354, cysteine 2349–cysteine 2363, and cysteine 2365–cysteine 2378. Serine 2193 is a glycosylation site (O-linked (Glc) serine). In terms of domain architecture, EGF-like 37; calcium-binding spans 2213–2252; sequence DTDECSIGNPCGNGTCTNVIGSFECNCNEGFEPGPMMNCE. An N-linked (GlcNAc...) asparagine glycan is attached at asparagine 2225. One can recognise an EGF-like 38; calcium-binding domain in the interval 2253-2293; sequence DINECAQNPLLCAFRCMNTFGSYECTCPIGYALREDQKMCK. A glycan (O-linked (Glc) serine) is linked at serine 2274. In terms of domain architecture, EGF-like 39; calcium-binding spans 2294-2337; sequence DLDECAEGLHDCESRGMMCKNLIGTFMCICPPGMARRPDGEGCV. The EGF-like 40; calcium-binding domain occupies 2338–2379; it reads DENECRTKPGICENGRCVNIIGSYRCECNEGFQSSSSGTECL. An O-linked (Glc) serine glycan is attached at serine 2360. Residues 2384-2437 form the TB 9 domain; sequence GLCFAEVLQTICQMASSSRNLVTKSECCCDGGRGWGHQCELCPLPGTAQYKKIC. One can recognise an EGF-like 41; calcium-binding domain in the interval 2449 to 2490; the sequence is DIDECKVMPNLCTNGQCINTMGSFRCFCKVGYTTDISGTSCI. Disulfide bonds link cysteine 2453-cysteine 2465, cysteine 2460-cysteine 2474, cysteine 2476-cysteine 2489, cysteine 2495-cysteine 2506, cysteine 2502-cysteine 2515, cysteine 2517-cysteine 2530, cysteine 2536-cysteine 2547, cysteine 2543-cysteine 2556, cysteine 2558-cysteine 2569, cysteine 2575-cysteine 2588, cysteine 2582-cysteine 2597, cysteine 2599-cysteine 2612, cysteine 2618-cysteine 2628, cysteine 2624-cysteine 2637, cysteine 2639-cysteine 2652, cysteine 2658-cysteine 2669, cysteine 2664-cysteine 2678, cysteine 2680-cysteine 2693, cysteine 2699-cysteine 2710, cysteine 2706-cysteine 2719, and cysteine 2721-cysteine 2733. An O-linked (Glc) serine glycan is attached at serine 2471. The EGF-like 42; calcium-binding domain maps to 2491–2531; it reads DLDECSQSPKPCNYICKNTEGSYQCSCPRGYVLQEDGKTCK. Serine 2512 is a glycosylation site (O-linked (Glc) serine). In terms of domain architecture, EGF-like 43; calcium-binding spans 2532 to 2570; that stretch reads DLDECQTKQHNCQFLCVNTLGGFTCKCPPGFTQHHTACI. In terms of domain architecture, EGF-like 44; calcium-binding spans 2571–2613; the sequence is DNNECGSQPSLCGAKGICQNTPGSFSCECQRGFSLDATGLNCE. Serine 2594 is a glycosylation site (O-linked (Glc) serine). The EGF-like 45; calcium-binding domain occupies 2614–2653; sequence DVDECDGNHRCQHGCQNILGGYRCGCPQGYIQHYQWNQCV. Residues 2654 to 2694 form the EGF-like 46; calcium-binding domain; it reads DENECSNPNACGSASCYNTLGSYKCACPSGFSFDQFSSACH. O-linked (Glc) serine glycosylation occurs at serine 2675. The EGF-like 47; calcium-binding domain maps to 2695-2734; the sequence is DVNECSSSKNPCNYGCSNTEGGYLCGCPPGYYRVGQGHCV. The N-linked (GlcNAc...) asparagine glycan is linked to asparagine 2808.

This sequence belongs to the fibrillin family. Interacts with BMP2, BMP4, BMP7, BMP10 and GDF5. Interacts with MFAP2 and MFAP5. Interacts with ADAMTSL5. Interacts with MFAP4. Post-translationally, N-glycosylated. O-glycosylated on serine residues by POGLUT2 and POGLUT3. In terms of tissue distribution, almost exclusively expressed in placenta. Expressed at much lower level in other tissues. Expressed in fetal eye (18 weeks)in the retinal pigment epithelium (RPE), the choroid, Bruch's membrane and in the sclera. Not expressed in the neural retina. Present at high level in cytotrophoblasts as compared with syncytiotrophoblasts at 8-9 weeks of pregnancy (at protein level). Levels in the serum increase during pregnancy (at protein level).

Its subcellular location is the secreted. The protein resides in the extracellular space. The protein localises to the extracellular matrix. In terms of biological role, fibrillins are structural components of 10-12 nm extracellular calcium-binding microfibrils, which occur either in association with elastin or in elastin-free bundles. Fibrillin-2-containing microfibrils regulate the early process of elastic fiber assembly. Regulates osteoblast maturation by controlling TGF-beta bioavailability and calibrating TGF-beta and BMP levels, respectively. Functionally, hormone secreted by trophoblasts that promotes trophoblast invasiveness. Has glucogenic activity: is able to increase plasma glucose levels. The protein is Fibrillin-2 of Homo sapiens (Human).